The primary structure comprises 443 residues: Differentially expressed in FDCP 8 homolog B (443 aa).

Positions 14–49 (HLNPFDKKGGAERHPADSETQPCKDSSTSSPLSVPE) are disordered. Residues 17–30 (PFDKKGGAERHPAD) are compositionally biased toward basic and acidic residues. A compositionally biased stretch (polar residues) spans 31 to 45 (SETQPCKDSSTSSPL). 2 consecutive Phorbol-ester/DAG-type zinc fingers follow at residues 134–185 (EHRF…TKPC) and 364–424 (IHTT…STSC).

This sequence belongs to the DEF8 family.

Positively regulates lysosome peripheral distribution and ruffled border formation in osteoclasts. Involved in bone resorption. The protein is Differentially expressed in FDCP 8 homolog B (def8-b) of Xenopus laevis (African clawed frog).